The primary structure comprises 223 residues: MIENLRKRSTIEVEWRKQPVHMDIDLDQVDNPEAYPITVSVETSKDGSDPGLLWQPMHAERDSIVKETIHAKYVLGCDGARSWIRQRLGVSFIGDLTDSTWGVMDIVPKTSFPDIRKVAVIHSSKGTVMSVPREDKLVRFYIQIDAVNPNAASGLARRDLKVEDLLDAARAIMFPYTMEAAECAWWSAYRVGQRVANEFARHDRIFLAGDSVREYCLEVIRCQ.

FAD-binding positions include 139–141 (RFY), Tyr189, and Asp210.

The protein belongs to the PheA/TfdB FAD monooxygenase family.

The protein operates within secondary metabolite biosynthesis. Functionally, FAD-dependent monooxygenase; part of the gene cluster that mediates the biosynthesis of imizoquins A to D, tripeptide-derived alkaloids that serve a protective role against oxidative stress that are essential for normal germination. ImqB is a canonical three-module NRPS that assembles the tripeptide backbone of the imizoquins via condensation of Trp, Tyr, and Leu-derived precursors. N-methylation by imqF and phenol oxidation by imqC, followed by cyclization via the FAD-dependent oxidase imqH carry out the three-step transformation of L-tyrosine into tetrahydroisoquinoline. Importantly, this sequence requires the presence of a free amine in the tyrosine moiety, indicating that isoquinoline formation occurs prior to peptide bond formation. The imidazolidin-4-one ring of imizoquins could form following additional oxidation of the methyl-derived bridgehead carbon by imqH. Lastly, O-methylation by imqG and leucine hydroxylation by imqE complete biosynthesis of the imizoquins. This chain is FAD-dependent monooxygenase imqC, found in Aspergillus flavus (strain ATCC 200026 / FGSC A1120 / IAM 13836 / NRRL 3357 / JCM 12722 / SRRC 167).